We begin with the raw amino-acid sequence, 341 residues long: Ribulose-5-phosphate reductase (341 aa).

Zn(2+) is bound by residues Cys-38, His-64, Glu-65, and Glu-144.

The protein belongs to the zinc-containing alcohol dehydrogenase family. Zn(2+) serves as cofactor.

The enzyme catalyses D-ribitol 5-phosphate + NADP(+) = D-ribulose 5-phosphate + NADPH + H(+). It participates in cell wall biogenesis; poly(ribitol phosphate) teichoic acid biosynthesis. Its function is as follows. Catalyzes the NADPH dependent reduction of D-ribulose 5-phosphate to D-ribitol 5-phosphate. In Bacillus spizizenii (strain ATCC 23059 / NRRL B-14472 / W23) (Bacillus subtilis subsp. spizizenii), this protein is Ribulose-5-phosphate reductase.